The sequence spans 310 residues: ADP-L-glycero-D-manno-heptose-6-epimerase (310 aa).

NADP(+) is bound by residues 10–11, 31–32, Lys38, Lys53, 75–79, and Asn92; these read FI, DN, and EGACS. The Proton acceptor role is filled by Tyr140. Position 144 (Lys144) interacts with NADP(+). Substrate is bound at residue Asn169. 2 residues coordinate NADP(+): Val170 and Lys178. The active-site Proton acceptor is Lys178. Substrate-binding positions include Gly180, His187, 201–204, Arg209, and Tyr272; that span reads FAGS.

This sequence belongs to the NAD(P)-dependent epimerase/dehydratase family. HldD subfamily. As to quaternary structure, homopentamer. NADP(+) is required as a cofactor.

It catalyses the reaction ADP-D-glycero-beta-D-manno-heptose = ADP-L-glycero-beta-D-manno-heptose. The protein operates within nucleotide-sugar biosynthesis; ADP-L-glycero-beta-D-manno-heptose biosynthesis; ADP-L-glycero-beta-D-manno-heptose from D-glycero-beta-D-manno-heptose 7-phosphate: step 4/4. In terms of biological role, catalyzes the interconversion between ADP-D-glycero-beta-D-manno-heptose and ADP-L-glycero-beta-D-manno-heptose via an epimerization at carbon 6 of the heptose. The sequence is that of ADP-L-glycero-D-manno-heptose-6-epimerase from Sodalis glossinidius (strain morsitans).